The primary structure comprises 425 residues: CBS domain-containing protein CBSX6 (425 aa).

Residues 16-90 (GKPEMVEFYE…FLAKTECLQE (75 aa)) form the CBS 1 domain. Over residues 159–172 (SENSSSSSGLSADS) the composition is skewed to low complexity. The disordered stretch occupies residues 159-182 (SENSSSSSGLSADSTNRPTTSMTS). Residues 173–182 (TNRPTTSMTS) show a composition bias toward polar residues. 2 consecutive transmembrane segments (helical) span residues 200 to 220 (IGVL…LGII) and 275 to 295 (YLAA…MGVE). The region spanning 347–409 (MYRGRSAPLT…TAVTKQPSAF (63 aa)) is the CBS 2 domain.

It is found in the vacuole membrane. The protein is CBS domain-containing protein CBSX6 (CBSX6) of Arabidopsis thaliana (Mouse-ear cress).